The primary structure comprises 311 residues: Glutamyl-Q tRNA(Asp) synthetase (311 aa).

Residues 14–18 and E50 each bind L-glutamate; that span reads RYAPS. The 'HIGH' region motif lies at 17–27; sequence PSPSGDLHLGN. The Zn(2+) site is built by C104, C106, Y125, and C129. The L-glutamate site is built by Y186 and R204. The 'KMSKS' region signature appears at 242–246; sequence RLAKR. K245 contributes to the ATP binding site.

The protein belongs to the class-I aminoacyl-tRNA synthetase family. GluQ subfamily. Zn(2+) is required as a cofactor.

In terms of biological role, catalyzes the tRNA-independent activation of glutamate in presence of ATP and the subsequent transfer of glutamate onto a tRNA(Asp). Glutamate is transferred on the 2-amino-5-(4,5-dihydroxy-2-cyclopenten-1-yl) moiety of the queuosine in the wobble position of the QUC anticodon. The chain is Glutamyl-Q tRNA(Asp) synthetase from Nocardia farcinica (strain IFM 10152).